Reading from the N-terminus, the 302-residue chain is AP-1 complex-associated regulatory protein (302 aa).

Serine 29 carries the post-translational modification Phosphoserine. An interaction with AP1G1 region spans residues 78-138; the sequence is DSIAEKQKDL…ERQRIVQQYH (61 aa). Residues 80–138 are a coiled coil; it reads IAEKQKDLDKKIQKELALQEEKLRLEEEALYAAQREAARAAKQRKLLEQERQRIVQQYH. Polar residues predominate over residues 188-206; that stretch reads CDLMTKTKSTSGNDDSTSL. The interval 188 to 258 is disordered; it reads CDLMTKTKST…TSASDDSNGL (71 aa). Positions 199–215 are sufficient for association with the Arp2/3 complex; it reads GNDDSTSLDLEWEDEEG. Over residues 221 to 233 the composition is skewed to basic and acidic residues; that stretch reads PMRERSKTEEDIL. At serine 226 the chain carries Phosphoserine. Threonine 228 carries the phosphothreonine modification. Residues 242–255 show a composition bias toward polar residues; that stretch reads KKTGSNPTSASDDS.

As to quaternary structure, interacts (via coiled-coil domain) with AP1G1 (via GAE domain). Interacts with KIF5B. Associates with the Arp2/3 complex. Palmitoylated.

The protein localises to the golgi apparatus. It localises to the trans-Golgi network. The protein resides in the late endosome. It is found in the early endosome. Necessary for adaptor protein complex 1 (AP-1)-dependent transport between the trans-Golgi network and endosomes. Regulates the membrane association of AP1G1/gamma1-adaptin, one of the subunits of the AP-1 adaptor complex. The direct interaction with AP1G1/gamma1-adaptin attenuates the release of the AP-1 complex from membranes. Regulates endosomal membrane traffic via association with AP-1 and KIF5B thus linking kinesin-based plus-end-directed microtubular transport to AP-1-dependent membrane traffic. May act as effector of AP-1 in calcium-induced endo-lysosome secretion. Inhibits Arp2/3 complex function; negatively regulates cell spreading, size and motility via intracellular sequestration of the Arp2/3 complex. In Homo sapiens (Human), this protein is AP-1 complex-associated regulatory protein (AP1AR).